A 338-amino-acid chain; its full sequence is Holliday junction branch migration complex subunit RuvB (338 aa).

The tract at residues 1–181 (MDRIVEIEKV…FGMDFRLQFY (181 aa)) is large ATPase domain (RuvB-L). ATP contacts are provided by residues leucine 20, arginine 21, glycine 62, lysine 65, threonine 66, threonine 67, 128-130 (EDF), arginine 171, tyrosine 181, and arginine 218. Threonine 66 contributes to the Mg(2+) binding site. The tract at residues 182–252 (STAELSRIIQ…RAKEGLNALG (71 aa)) is small ATPAse domain (RuvB-S). Residues 255–338 (SLGFDEMDIK…NRTKGLFDGE (84 aa)) are head domain (RuvB-H). 2 residues coordinate DNA: arginine 309 and arginine 314.

The protein belongs to the RuvB family. Homohexamer. Forms an RuvA(8)-RuvB(12)-Holliday junction (HJ) complex. HJ DNA is sandwiched between 2 RuvA tetramers; dsDNA enters through RuvA and exits via RuvB. An RuvB hexamer assembles on each DNA strand where it exits the tetramer. Each RuvB hexamer is contacted by two RuvA subunits (via domain III) on 2 adjacent RuvB subunits; this complex drives branch migration. In the full resolvosome a probable DNA-RuvA(4)-RuvB(12)-RuvC(2) complex forms which resolves the HJ.

It localises to the cytoplasm. It catalyses the reaction ATP + H2O = ADP + phosphate + H(+). Functionally, the RuvA-RuvB-RuvC complex processes Holliday junction (HJ) DNA during genetic recombination and DNA repair, while the RuvA-RuvB complex plays an important role in the rescue of blocked DNA replication forks via replication fork reversal (RFR). RuvA specifically binds to HJ cruciform DNA, conferring on it an open structure. The RuvB hexamer acts as an ATP-dependent pump, pulling dsDNA into and through the RuvAB complex. RuvB forms 2 homohexamers on either side of HJ DNA bound by 1 or 2 RuvA tetramers; 4 subunits per hexamer contact DNA at a time. Coordinated motions by a converter formed by DNA-disengaged RuvB subunits stimulates ATP hydrolysis and nucleotide exchange. Immobilization of the converter enables RuvB to convert the ATP-contained energy into a lever motion, pulling 2 nucleotides of DNA out of the RuvA tetramer per ATP hydrolyzed, thus driving DNA branch migration. The RuvB motors rotate together with the DNA substrate, which together with the progressing nucleotide cycle form the mechanistic basis for DNA recombination by continuous HJ branch migration. Branch migration allows RuvC to scan DNA until it finds its consensus sequence, where it cleaves and resolves cruciform DNA. The protein is Holliday junction branch migration complex subunit RuvB of Campylobacter curvus (strain 525.92).